The sequence spans 758 residues: Polyribonucleotide nucleotidyltransferase (758 aa).

Mg(2+) is bound by residues Asp488 and Asp494. One can recognise a KH domain in the interval 555 to 614 (PKLYTMKINPEKIRDVIGKGGAVIRALTEETGTQINIDEDGTITIASTDSAKADEAKRRI). Residues 624–692 (GKIYEGPVVK…EKGRVKLSMR (69 aa)) enclose the S1 motif domain. Residues 692-758 (RALLDRPMGD…AGEHSGQMDA (67 aa)) are disordered. The span at 707–735 (PAERGERGDRGDRGDRPERGERRERREPA) shows a compositional bias: basic and acidic residues. Low complexity predominate over residues 736–745 (GADQQQQQQQ).

Belongs to the polyribonucleotide nucleotidyltransferase family. Mg(2+) is required as a cofactor.

The protein resides in the cytoplasm. It catalyses the reaction RNA(n+1) + phosphate = RNA(n) + a ribonucleoside 5'-diphosphate. In terms of biological role, involved in mRNA degradation. Catalyzes the phosphorolysis of single-stranded polyribonucleotides processively in the 3'- to 5'-direction. The protein is Polyribonucleotide nucleotidyltransferase of Paracidovorax citrulli (strain AAC00-1) (Acidovorax citrulli).